A 272-amino-acid chain; its full sequence is Putative phosphoenolpyruvate synthase regulatory protein (272 aa).

152 to 159 (GVSRCGKT) is a binding site for ADP.

This sequence belongs to the pyruvate, phosphate/water dikinase regulatory protein family. PSRP subfamily.

The enzyme catalyses [pyruvate, water dikinase] + ADP = [pyruvate, water dikinase]-phosphate + AMP + H(+). It carries out the reaction [pyruvate, water dikinase]-phosphate + phosphate + H(+) = [pyruvate, water dikinase] + diphosphate. Its function is as follows. Bifunctional serine/threonine kinase and phosphorylase involved in the regulation of the phosphoenolpyruvate synthase (PEPS) by catalyzing its phosphorylation/dephosphorylation. The polypeptide is Putative phosphoenolpyruvate synthase regulatory protein (Pseudomonas fluorescens (strain ATCC BAA-477 / NRRL B-23932 / Pf-5)).